The following is a 1308-amino-acid chain: Spermatogenesis-associated protein 31F1B (1308 aa).

Residues phenylalanine 7–isoleucine 27 traverse the membrane as a helical segment. 7 disordered regions span residues serine 464–proline 488, serine 627–glycine 648, histidine 844–leucine 863, proline 902–glycine 927, phenylalanine 1005–lysine 1026, glycine 1084–lysine 1190, and methionine 1204–glutamine 1254. Positions proline 465–serine 478 are enriched in pro residues. The segment covering methionine 1107–aspartate 1117 has biased composition (acidic residues).

Belongs to the SPATA31 family.

The protein localises to the membrane. This Mus musculus (Mouse) protein is Spermatogenesis-associated protein 31F1B.